The primary structure comprises 195 residues: Putative lysine exporter (195 aa).

6 helical membrane-spanning segments follow: residues 4–24, 30–50, 61–81, 86–106, 117–137, and 170–190; these read LLSA…WLHF, LYVL…NGIS, LMMG…SAFF, ITQG…SVVL, IAFF…PLFM, and PIAI…LVFF.

Belongs to the LysO family.

Its subcellular location is the cell inner membrane. Mediates export of lysine. This is Putative lysine exporter from Haemophilus influenzae (strain ATCC 51907 / DSM 11121 / KW20 / Rd).